The following is a 178-amino-acid chain: Dual-action ribosomal maturation protein DarP (178 aa).

Belongs to the DarP family.

Its subcellular location is the cytoplasm. In terms of biological role, member of a network of 50S ribosomal subunit biogenesis factors which assembles along the 30S-50S interface, preventing incorrect 23S rRNA structures from forming. Promotes peptidyl transferase center (PTC) maturation. This chain is Dual-action ribosomal maturation protein DarP, found in Mannheimia succiniciproducens (strain KCTC 0769BP / MBEL55E).